The following is a 430-amino-acid chain: UPF0597 protein CV_1824 (430 aa).

The protein belongs to the UPF0597 family.

This is UPF0597 protein CV_1824 from Chromobacterium violaceum (strain ATCC 12472 / DSM 30191 / JCM 1249 / CCUG 213 / NBRC 12614 / NCIMB 9131 / NCTC 9757 / MK).